A 519-amino-acid polypeptide reads, in one-letter code: Serine/threonine-protein kinase RIO3 (519 aa).

2 positions are modified to phosphoserine: Ser8 and Ser112. The residue at position 122 (Tyr122) is a Phosphotyrosine. The disordered stretch occupies residues 122–159 (YEDSDSSEDEVDWQDTRDDPYRPAKPIPTPKKGFIGKG). Over residues 124-134 (DSDSSEDEVDW) the composition is skewed to acidic residues. 3 positions are modified to phosphoserine: Ser125, Ser127, and Ser128. The region spanning 251-519 (ETITGCISTG…DGGPPILYDE (269 aa)) is the Protein kinase domain. Residues 257-265 (ISTGKESVV) and Lys290 contribute to the ATP site. Catalysis depends on Asp406, which acts as the Proton acceptor.

This sequence belongs to the protein kinase superfamily. RIO-type Ser/Thr kinase family. In terms of assembly, interacts with CASP10. Interacts with IRF3; RIOK3 probably mediates the interaction of TBK1 with IRF3. Associated with 40S pre-ribosomal particles. The cofactor is Mg(2+). In terms of processing, autophosphorylated (in vitro).

It localises to the cytoplasm. The enzyme catalyses L-seryl-[protein] + ATP = O-phospho-L-seryl-[protein] + ADP + H(+). The catalysed reaction is L-threonyl-[protein] + ATP = O-phospho-L-threonyl-[protein] + ADP + H(+). Involved in regulation of type I interferon (IFN)-dependent immune response which plays a critical role in the innate immune response against DNA and RNA viruses. May act as an adapter protein essential for the recruitment of TBK1 to IRF3. Phosphorylates IFIH1 within the C-terminal region interfering with IFIH1 filament assembly on long dsRNA and resulting in attenuated IFIH1-signaling. Can inhibit CASP10 isoform 7-mediated activation of the NF-kappaB signaling pathway. May play a role in the biogenesis of the 40S ribosomal subunit. Involved in the processing of 21S pre-rRNA to the mature 18S rRNA. The chain is Serine/threonine-protein kinase RIO3 (RIOK3) from Bos taurus (Bovine).